We begin with the raw amino-acid sequence, 90 residues long: Small ribosomal subunit protein bS16 (90 aa).

The protein belongs to the bacterial ribosomal protein bS16 family.

This is Small ribosomal subunit protein bS16 from Lactococcus lactis subsp. lactis (strain IL1403) (Streptococcus lactis).